Here is a 170-residue protein sequence, read N- to C-terminus: Putative pre-16S rRNA nuclease (170 aa).

Over residues 1–18 (MGTDDRLPDRPGADDPGR) the composition is skewed to basic and acidic residues. The disordered stretch occupies residues 1–22 (MGTDDRLPDRPGADDPGRGRRI).

It belongs to the YqgF nuclease family.

It is found in the cytoplasm. Functionally, could be a nuclease involved in processing of the 5'-end of pre-16S rRNA. This is Putative pre-16S rRNA nuclease from Mycolicibacterium smegmatis (strain ATCC 700084 / mc(2)155) (Mycobacterium smegmatis).